The primary structure comprises 231 residues: Small ribosomal subunit protein uS3 (231 aa).

The KH type-2 domain maps to Ile-39–Lys-107.

Belongs to the universal ribosomal protein uS3 family. In terms of assembly, part of the 30S ribosomal subunit. Forms a tight complex with proteins S10 and S14.

Binds the lower part of the 30S subunit head. Binds mRNA in the 70S ribosome, positioning it for translation. In Pelotomaculum thermopropionicum (strain DSM 13744 / JCM 10971 / SI), this protein is Small ribosomal subunit protein uS3.